The following is a 642-amino-acid chain: MHGLLLAGLLALPLNVLAHPTESHSSGISRRAIDITSYRLPQISKYTKSDSLTGQDGQSFTASSADADTSSGDYVSTATNWLKKTLPNASYRLVNDHYIGDSGIGHVHFRQTAHGIDIDNTDFNVNIGRDGKVFSFGNSFYDGEIPKANPMVKRDFSDPVDALHGAIQTLNIPVTAKPENVKAKPVEGKESFKFEGTSGALSDPKAQLVYLQKDGGLVLSWKVETDVGDNWLLSYVDANDKGKVHSVVDYVSAAAYEVYPWGINDPTEGKRSTIHVPWFKTQSVDWHIDGKNWYPTTRGNNAIAQENPTGQREYENNYRPKSPLFIFKYPYSEAMSPPSSYRDASITQLFYTTNVFHDVLYILGFNEKAGNFQTNNWNKGGLGGDYAILNSQDGSGVNNANFATPPDGEPGRMRMYNWNASTPERDGCFEAGIVIHEYTHGVSNRLTGGPANSRCLAALESGGMGEGWSDFFATAIRLKNGDTRATDYTMGEWASNRPNGIRKYRYSTNLTTNPHMYVDADGLTSVHAIGTIWASMLYEMLWNLIDKHGKGDVSKVKPTLKNGVPTDGRHLAMKIVLDGMALQPCLPNFVQARDAIIDADKNLTGGSNKCEIWKAFAKRGLGVGAVYNPSKRTGSNELPAGC.

The N-terminal stretch at 1 to 18 is a signal peptide; sequence MHGLLLAGLLALPLNVLA. Positions 19–253 are excised as a propeptide; the sequence is HPTESHSSGI…VHSVVDYVSA (235 aa). Polar residues predominate over residues 49–60; it reads SDSLTGQDGQSF. Residues 49–72 are disordered; it reads SDSLTGQDGQSFTASSADADTSSG. Residues 61–71 are compositionally biased toward low complexity; sequence TASSADADTSS. N-linked (GlcNAc...) asparagine glycosylation occurs at N419. Residue H436 coordinates Zn(2+). E437 is a catalytic residue. H440 contributes to the Zn(2+) binding site. N-linked (GlcNAc...) asparagine glycans are attached at residues N509 and N602.

This sequence belongs to the peptidase M36 family. Zn(2+) serves as cofactor.

It localises to the secreted. In terms of biological role, secreted metalloproteinase that allows assimilation of proteinaceous substrates and probably acts as a virulence factor. This chain is Extracellular metalloproteinase 4 (MEP4), found in Arthroderma gypseum (strain ATCC MYA-4604 / CBS 118893) (Microsporum gypseum).